The sequence spans 177 residues: R-phycoerythrin beta chain (177 aa).

(2R,3E)-phycoerythrobilin contacts are provided by Asn-35 and Asp-39. 3 residues coordinate phycourobilin: Cys-50, Asp-54, and Cys-61. Residues Asn-72, 77-78, Cys-82, and 84-85 each bind (2R,3E)-phycoerythrobilin; these read RR and RD. An N4-methylasparagine modification is found at Asn-72. 147 to 148 contacts phycourobilin; that stretch reads SG. Cys-158 contributes to the (2R,3E)-phycoerythrobilin binding site.

The protein belongs to the phycobiliprotein family. Heterododecamer of 6 alpha and 6 beta chains. The basic functional unit of phycobiliproteins is a ring-shaped hexamer formed from two back-to-back trimers contacting via the alpha chain subunits. The trimers are composed of alpha/beta subunit heterodimers arranged around a three-fold axis of symmetry. The phycoerythrins also contain a gamma subunit which is located in the center of the hexamer. Post-translationally, contains two covalently linked phycoerythrobilin chromophores and one covalently linked phycourobilin chromophore.

Its subcellular location is the plastid. It is found in the chloroplast thylakoid membrane. Functionally, light-harvesting photosynthetic tetrapyrrole chromophore-protein from the phycobiliprotein complex. In Griffithsia monilis (Red alga), this protein is R-phycoerythrin beta chain (cpeB).